The sequence spans 655 residues: Probable potassium transport system protein Kup (655 aa).

12 helical membrane passes run 19–39, 42–62, 102–122, 132–152, 161–181, 214–234, 246–266, 282–302, 338–358, 370–390, 395–415, and 420–440; these read GLLI…LYVM, IAGG…CVFW, VWPA…TPPI, LIFN…VMLF, IVGK…ATLG, SGFW…ALYS, ISWI…GAWI, IMPE…AIIA, LFIP…VLWF, LAIN…LLII, FIWV…FLVA, and FFHG…IMII.

Belongs to the HAK/KUP transporter (TC 2.A.72) family.

It is found in the cell inner membrane. It carries out the reaction K(+)(in) + H(+)(in) = K(+)(out) + H(+)(out). Transport of potassium into the cell. Likely operates as a K(+):H(+) symporter. This chain is Probable potassium transport system protein Kup, found in Cytophaga hutchinsonii (strain ATCC 33406 / DSM 1761 / CIP 103989 / NBRC 15051 / NCIMB 9469 / D465).